The sequence spans 233 residues: MSSDIQQIRIGLTNNHPCSYLADRMERVAVAIDPQMQTPETYEVLMANGFRRSGDTIYKPHCDHCQSCQALRIPAPDFVPSKSQKRLLKLLSQEFHWQLKPELDEDWYALYARYIFARHRHGSMYPPNKMEFAKFARAKWLNTQYLHLYQGEKLVAIAVTDLLPNSASAFYTFYDPDISISLGTLAVLCQLNYCQQTKKQWLYLGYQIDECPAMNYKVRFNPHQRLVNQRWRG.

Belongs to the R-transferase family. Bpt subfamily.

Its subcellular location is the cytoplasm. The catalysed reaction is N-terminal L-glutamyl-[protein] + L-leucyl-tRNA(Leu) = N-terminal L-leucyl-L-glutamyl-[protein] + tRNA(Leu) + H(+). The enzyme catalyses N-terminal L-aspartyl-[protein] + L-leucyl-tRNA(Leu) = N-terminal L-leucyl-L-aspartyl-[protein] + tRNA(Leu) + H(+). Its function is as follows. Functions in the N-end rule pathway of protein degradation where it conjugates Leu from its aminoacyl-tRNA to the N-termini of proteins containing an N-terminal aspartate or glutamate. This chain is Aspartate/glutamate leucyltransferase, found in Vibrio cholerae serotype O1 (strain ATCC 39541 / Classical Ogawa 395 / O395).